Here is a 373-residue protein sequence, read N- to C-terminus: CCA-adding enzyme (373 aa).

Residues glycine 8 and arginine 11 each coordinate ATP. Glycine 8 and arginine 11 together coordinate CTP. Aspartate 21 and aspartate 23 together coordinate Mg(2+). 3 residues coordinate ATP: arginine 91, arginine 137, and arginine 140. CTP is bound by residues arginine 91, arginine 137, and arginine 140.

The protein belongs to the tRNA nucleotidyltransferase/poly(A) polymerase family. Bacterial CCA-adding enzyme type 2 subfamily. Mg(2+) is required as a cofactor.

The enzyme catalyses a tRNA precursor + 2 CTP + ATP = a tRNA with a 3' CCA end + 3 diphosphate. It carries out the reaction a tRNA with a 3' CCA end + 2 CTP + ATP = a tRNA with a 3' CCACCA end + 3 diphosphate. In terms of biological role, catalyzes the addition and repair of the essential 3'-terminal CCA sequence in tRNAs without using a nucleic acid template. Adds these three nucleotides in the order of C, C, and A to the tRNA nucleotide-73, using CTP and ATP as substrates and producing inorganic pyrophosphate. tRNA 3'-terminal CCA addition is required both for tRNA processing and repair. Also involved in tRNA surveillance by mediating tandem CCA addition to generate a CCACCA at the 3' terminus of unstable tRNAs. While stable tRNAs receive only 3'-terminal CCA, unstable tRNAs are marked with CCACCA and rapidly degraded. This is CCA-adding enzyme from Marinobacter nauticus (strain ATCC 700491 / DSM 11845 / VT8) (Marinobacter aquaeolei).